Consider the following 72-residue polypeptide: Translation initiation factor IF-1 (72 aa).

The S1-like domain maps to 1 to 72; that stretch reads MAKEGAIEVE…TRGRIVYRYK (72 aa).

Belongs to the IF-1 family. Component of the 30S ribosomal translation pre-initiation complex which assembles on the 30S ribosome in the order IF-2 and IF-3, IF-1 and N-formylmethionyl-tRNA(fMet); mRNA recruitment can occur at any time during PIC assembly.

It is found in the cytoplasm. Its function is as follows. One of the essential components for the initiation of protein synthesis. Stabilizes the binding of IF-2 and IF-3 on the 30S subunit to which N-formylmethionyl-tRNA(fMet) subsequently binds. Helps modulate mRNA selection, yielding the 30S pre-initiation complex (PIC). Upon addition of the 50S ribosomal subunit IF-1, IF-2 and IF-3 are released leaving the mature 70S translation initiation complex. The chain is Translation initiation factor IF-1 from Corynebacterium glutamicum (strain R).